Consider the following 162-residue polypeptide: Protein NrdI (162 aa).

This sequence belongs to the NrdI family.

Probably involved in ribonucleotide reductase function. In Streptococcus pyogenes serotype M3 (strain ATCC BAA-595 / MGAS315), this protein is Protein NrdI.